Here is a 506-residue protein sequence, read N- to C-terminus: Maturase K (506 aa).

The protein belongs to the intron maturase 2 family. MatK subfamily.

The protein localises to the plastid. It is found in the chloroplast. Usually encoded in the trnK tRNA gene intron. Probably assists in splicing its own and other chloroplast group II introns. The sequence is that of Maturase K from Calluna vulgaris (Heather).